Here is a 438-residue protein sequence, read N- to C-terminus: Polycomb protein eed-B (438 aa).

A disordered region spans residues 1-70 (MSEASGRAAG…GRKGWGKGKW (70 aa)). A compositionally biased stretch (polar residues) spans 40–57 (SIESGTNTERPDTPTNAA). WD repeat units lie at residues 88–131 (DHNQ…DIRL), 139–182 (DADE…CIKH), 185–225 (GHGN…LVAI), 231–270 (GHRDEVLSADYDLLGEKIMSCGMDHSLKLWRINSLRMKTA), 301–338 (IHRNYVDCVRWLGDLILSKSCENAIVCWKPGKMEDDIE), 356–396 (SQCD…PHKA), and 405–438 (KCASAIRQTSFSRDSSVLIAVCDDSTIWRWDRLR).

This sequence belongs to the WD repeat ESC family. As to quaternary structure, component of the prc2/eed-ezh2 complex. Can interact with ezh2, hdac1 and taf9. Interacts with yy1.

Its subcellular location is the nucleus. In terms of biological role, polycomb group (PcG) protein. Component of the prc2/eed-ezh2 complex, which methylates 'Lys-9' and 'Lys-27' of histone H3, leading to transcriptional repression of the affected target gene. May play a role in neural induction. This chain is Polycomb protein eed-B (eed-b), found in Xenopus laevis (African clawed frog).